Consider the following 546-residue polypeptide: Probable sucrose-6-phosphate hydrolase (546 aa).

Substrate contacts are provided by residues 105–108 (LLND), Gln124, 167–168 (FS), 228–229 (RD), and Glu283. The active site involves Asp108.

The protein belongs to the glycosyl hydrolase 32 family.

Its subcellular location is the cytoplasm. It catalyses the reaction Hydrolysis of terminal non-reducing beta-D-fructofuranoside residues in beta-D-fructofuranosides.. Its pathway is glycan biosynthesis; sucrose metabolism. Its function is as follows. Enables the bacterium to metabolize sucrose as a sole carbon source. In Vibrio cholerae, this protein is Probable sucrose-6-phosphate hydrolase.